Reading from the N-terminus, the 172-residue chain is Protein LHCP TRANSLOCATION DEFECT (172 aa).

The transit peptide at 1 to 28 directs the protein to the chloroplast; the sequence is MASIPCTFQLSARASSASAAAAARRSPR. Residues 114–146 form an ANK repeat; it reads PVDILLMLAASEGDKPKLEELLRAGAKYDVKDV.

It is found in the plastid. It localises to the chloroplast. Its function is as follows. Involved in the import of light-harvesting complex proteins (LHCP) and subsequent routing of these proteins to the chloroplast signal recognition particle (SRP) pathway. The chain is Protein LHCP TRANSLOCATION DEFECT (LTD) from Oryza sativa subsp. indica (Rice).